The following is a 361-amino-acid chain: Zygote arrest protein 1 (361 aa).

Disordered regions lie at residues 68–129 (GPRP…PRSW) and 142–252 (GLSS…EQDK). Over residues 116-128 (PRSPARAGRPPRS) the composition is skewed to low complexity. A Phosphothreonine modification is found at T155. Residues 238–252 (ASRDRASPQSTEQDK) are compositionally biased toward basic and acidic residues. The 3CxxC-type zinc finger occupies 263–346 (KYGYYHCKDC…RQDLCGRCKD (84 aa)).

The protein belongs to the ZAR1 family. In terms of assembly, interacts with YBX2. Phosphorylation by CDK1 does not regulate formation of MARDO (mitochondria-associated ribonucleoprotein domain) membraneless compartment. In terms of processing, ubiquitinated and degradaded by the proteasome during oocyte meiotic maturation, leading to MARDO (mitochondria-associated ribonucleoprotein domain) membraneless compartment dissolution.

The protein localises to the cytoplasm. The protein resides in the cytoplasmic ribonucleoprotein granule. MRNA-binding protein that mediates formation of MARDO (mitochondria-associated ribonucleoprotein domain), a membraneless compartment that stores maternal mRNAs in oocytes. MARDO assembly around mitochondria is directed by an increase in mitochondrial membrane potential during oocyte growth. Promotes formation of MARDO phase-separated membraneless compartment by undergoing liquid-liquid phase separation upon binding to maternal mRNAs. Binds to the 3'-UTR of maternal mRNAs. Maternal mRNAs stored in the MARDO are translationally repressed. Essential for female fertility and oocyte-to-embryo transition by coordinating maternal mRNA storage, translation and degradation. The protein is Zygote arrest protein 1 of Rattus norvegicus (Rat).